The sequence spans 84 residues: Protein SlyX homolog (84 aa).

Belongs to the SlyX family.

This chain is Protein SlyX homolog, found in Mannheimia succiniciproducens (strain KCTC 0769BP / MBEL55E).